The chain runs to 483 residues: MKRKSEGRSSWAAATCSPCCSLTSPSVKKIRSPTQQDPRHRDPQDDVYLDITDRLRLAILYSRPKSASNVHYFSIDNELEYENFSEDFGPLNLAMVYRYCCKINKKLKSITMLRKKIVHFTGSDQRKQANAAFLVGCYMVIYLGRTPEEAYRTLIFGDTSYIPFRDAAYGSCNFYITLLDCFHAVKKAMQYGFLNFNSFNLDEYEHYEKAENGDLNWIIPDRFIAFCGPHSRARLESGYHQHSPETYIQYFKNRNVTTIIRLNKKMYDAKCFTDAGFDHHDLFFADGSSPTDAIVKGFLDICENAEGAIAVHCKAGLGRTGTLIACYIMKHYRMTAAETIAWVRICRPGLVIGPQQQFLVMKQTSLWLEGDYFCQKLKGQENGQHRAAFPKLHSGVDDISINGVENQDQQEPEPYSDDDEINGGTQGDRLRALKSRRQSKTNAILLTCPLAVLTSALCSVVIWWIVCDYILPILLFCLDGFGT.

The disordered stretch occupies residues 1 to 45 (MKRKSEGRSSWAAATCSPCCSLTSPSVKKIRSPTQQDPRHRDPQD). Positions 1-53 (MKRKSEGRSSWAAATCSPCCSLTSPSVKKIRSPTQQDPRHRDPQDDVYLDITD) match the Nucleolar localization signal motif. The span at 12-26 (AAATCSPCCSLTSPS) shows a compositional bias: low complexity. Positions 43–197 (PQDDVYLDIT…AMQYGFLNFN (155 aa)) are a. The segment at 198 to 211 (SFNLDEYEHYEKAE) is linker. The b stretch occupies residues 212-378 (NGDLNWIIPD…EGDYFCQKLK (167 aa)). In terms of domain architecture, Tyrosine-protein phosphatase spans 213 to 373 (GDLNWIIPDR…TSLWLEGDYF (161 aa)). The Phosphocysteine intermediate role is filled by Cys313. The interval 407–426 (QDQQEPEPYSDDDEINGGTQ) is disordered. Residues 408–421 (DQQEPEPYSDDDEI) show a composition bias toward acidic residues. The helical transmembrane segment at 444 to 466 (ILLTCPLAVLTSALCSVVIWWIV) threads the bilayer.

It belongs to the protein-tyrosine phosphatase family. Non-receptor class CDC14 subfamily.

It is found in the membrane. The protein resides in the nucleus. It localises to the nucleolus. Its subcellular location is the cytoplasm. The protein localises to the cytoskeleton. It carries out the reaction O-phospho-L-tyrosyl-[protein] + H2O = L-tyrosyl-[protein] + phosphate. The enzyme catalyses O-phospho-L-seryl-[protein] + H2O = L-seryl-[protein] + phosphate. The catalysed reaction is O-phospho-L-threonyl-[protein] + H2O = L-threonyl-[protein] + phosphate. Dual-specificity phosphatase. Preferentially dephosphorylates proteins modified by proline-directed kinases. This chain is Dual specificity protein phosphatase CDC14C, found in Symphalangus syndactylus (Siamang).